A 265-amino-acid chain; its full sequence is S-antigen protein (265 aa).

Positions 1-23 (MNRILSVTFYLFFIYLYIYETYG) are cleaved as a signal peptide. The interval 59–265 (DLQAEGEGEN…SIKNIMNMFI (207 aa)) is disordered. The segment covering 60–86 (LQAEGEGENDKEEDSNNEEMNIDEENG) has biased composition (acidic residues). A run of 12 repeats spans residues 97-107 (PAKASQGGLED), 108-118 (PAKASQGGLED), 119-129 (PAKASQGGLED), 130-140 (PAKASQGGLED), 141-151 (PAKASQGGLED), 152-162 (PAKASQGGLED), 163-173 (PAKASQGGLED), 174-184 (PAKASQGGLED), 185-195 (PAKASQGGLED), 196-206 (PAKASQGGLED), 207-217 (PAKASQGGLED), and 218-228 (PAKASQGGLED). Residues 97 to 239 (PAKASQGGLE…AKASQGGAEG (143 aa)) form a 13 X 11 AA approximate tandem repeats of P-A-K-A-S-Q-G-G-L-E-D region. One copy of the 13; approximate repeat lies at 229 to 239 (PAKASQGGAEG). The span at 239-257 (GHGKHAPNKENKNKNKESI) shows a compositional bias: basic and acidic residues.

It is found in the parasitophorous vacuole. Functionally, s antigens are soluble heat-stable proteins present in the sera of some infected individuals. This chain is S-antigen protein, found in Plasmodium falciparum (isolate FC27 / Papua New Guinea).